The primary structure comprises 239 residues: DNA repair protein RecO (239 aa).

This sequence belongs to the RecO family.

Its function is as follows. Involved in DNA repair and RecF pathway recombination. The protein is DNA repair protein RecO of Bifidobacterium animalis subsp. lactis (strain AD011).